We begin with the raw amino-acid sequence, 622 residues long: Putative E3 ubiquitin-protein ligase ORTHRUS 4 (622 aa).

The PHD-type zinc-finger motif lies at 12 to 62 (DGVCMRCQVTPPSEETLTCGTCVTPWHVSCLLPESLASSTGDWECPDCSGV). The RING-type 1 zinc-finger motif lies at 129–169 (CSICIQLPERPVTTPCGHNFCLKCFEKWAVGQGKLTCMICR). Positions 258-407 (TRNQGVLVGE…HKMCRYLFVR (150 aa)) constitute a YDG domain. The RING-type 2 zinc-finger motif lies at 498–555 (CQICRKVLSLPVTTPCAHNFCKACLEAKFAGITQLRDRSNGVRKLRAKKNIMTCPCCT). Residues 566–602 (QVNREMMEIIENFKKSEEEAEVAESSNISEEEEEESE) are a coiled coil. Residues 579 to 622 (KKSEEEAEVAESSNISEEEEEESEPPTKKIKMDNNSVGDTSLSA) are disordered. Polar residues predominate over residues 611 to 622 (DNNSVGDTSLSA).

Its subcellular location is the nucleus. It catalyses the reaction S-ubiquitinyl-[E2 ubiquitin-conjugating enzyme]-L-cysteine + [acceptor protein]-L-lysine = [E2 ubiquitin-conjugating enzyme]-L-cysteine + N(6)-ubiquitinyl-[acceptor protein]-L-lysine.. Its pathway is protein modification; protein ubiquitination. E3 ubiquitin-protein ligase. May participate in CpG methylation-dependent transcriptional regulation. The sequence is that of Putative E3 ubiquitin-protein ligase ORTHRUS 4 (ORTH4) from Arabidopsis thaliana (Mouse-ear cress).